A 138-amino-acid polypeptide reads, in one-letter code: Small ribosomal subunit protein uS11c (138 aa).

Positions 1 to 22 (MAKAIPKISSRRNGRISSRKGA) are disordered. The segment covering 9–22 (SSRRNGRISSRKGA) has biased composition (basic residues).

This sequence belongs to the universal ribosomal protein uS11 family. In terms of assembly, part of the 30S ribosomal subunit.

It localises to the plastid. The protein localises to the chloroplast. The sequence is that of Small ribosomal subunit protein uS11c from Solanum bulbocastanum (Wild potato).